The primary structure comprises 461 residues: D-phenylhydantoinase (461 aa).

Residues H59, H61, and K151 each coordinate a divalent metal cation. K151 carries the N6-carboxylysine modification. Y156 contributes to the substrate binding site. Positions 182 and 239 each coordinate a divalent metal cation. Residue S286 participates in substrate binding. A divalent metal cation is bound at residue D313. N335 contacts substrate.

It belongs to the metallo-dependent hydrolases superfamily. Hydantoinase/dihydropyrimidinase family. As to quaternary structure, homotetramer. The cofactor is a divalent metal cation. Post-translationally, carboxylation allows a single lysine to coordinate two divalent metal cations.

The catalysed reaction is D-5-phenylhydantoin + H2O = N-carbamoyl-D-phenylglycine + H(+). In terms of biological role, catalyzes the stereospecific hydrolysis of the cyclic amide bond of D-hydantoin derivatives with an aromatic side chains at the 5'-position. Has no activity on dihydropyrimidines. The physiological function is unknown. The chain is D-phenylhydantoinase from Escherichia coli O127:H6 (strain E2348/69 / EPEC).